We begin with the raw amino-acid sequence, 714 residues long: DNA ligase (714 aa).

Residues 48–52, 97–98, and Glu-129 contribute to the NAD(+) site; these read DADYD and SL. The N6-AMP-lysine intermediate role is filled by Lys-131. Arg-152, Glu-189, Lys-307, and Lys-331 together coordinate NAD(+). Positions 436, 439, 454, and 460 each coordinate Zn(2+). Positions 637–714 constitute a BRCT domain; sequence KQDTAVAGKT…TEDEWLALIG (78 aa).

It belongs to the NAD-dependent DNA ligase family. LigA subfamily. Mg(2+) serves as cofactor. Requires Mn(2+) as cofactor.

The enzyme catalyses NAD(+) + (deoxyribonucleotide)n-3'-hydroxyl + 5'-phospho-(deoxyribonucleotide)m = (deoxyribonucleotide)n+m + AMP + beta-nicotinamide D-nucleotide.. Functionally, DNA ligase that catalyzes the formation of phosphodiester linkages between 5'-phosphoryl and 3'-hydroxyl groups in double-stranded DNA using NAD as a coenzyme and as the energy source for the reaction. It is essential for DNA replication and repair of damaged DNA. The polypeptide is DNA ligase (Rhodopseudomonas palustris (strain BisB5)).